Reading from the N-terminus, the 477-residue chain is Sulfate adenylyltransferase subunit 1 (477 aa).

Residues 22-239 (KDMLRFITCG…TVQISHDAPL (218 aa)) form the tr-type G domain. The tract at residues 31-38 (GSVDDGKS) is G1. Residue 31–38 (GSVDDGKS) participates in GTP binding. Residues 89–93 (GITID) form a G2 region. Residues 110 to 113 (DCPG) are G3. GTP contacts are provided by residues 110-114 (DCPGH) and 165-168 (NKMD). Residues 165-168 (NKMD) are G4. The interval 202–204 (SAL) is G5.

This sequence belongs to the TRAFAC class translation factor GTPase superfamily. Classic translation factor GTPase family. CysN/NodQ subfamily. In terms of assembly, heterodimer composed of CysD, the smaller subunit, and CysN.

The catalysed reaction is sulfate + ATP + H(+) = adenosine 5'-phosphosulfate + diphosphate. The protein operates within sulfur metabolism; hydrogen sulfide biosynthesis; sulfite from sulfate: step 1/3. In terms of biological role, with CysD forms the ATP sulfurylase (ATPS) that catalyzes the adenylation of sulfate producing adenosine 5'-phosphosulfate (APS) and diphosphate, the first enzymatic step in sulfur assimilation pathway. APS synthesis involves the formation of a high-energy phosphoric-sulfuric acid anhydride bond driven by GTP hydrolysis by CysN coupled to ATP hydrolysis by CysD. This is Sulfate adenylyltransferase subunit 1 from Chromobacterium violaceum (strain ATCC 12472 / DSM 30191 / JCM 1249 / CCUG 213 / NBRC 12614 / NCIMB 9131 / NCTC 9757 / MK).